Here is a 768-residue protein sequence, read N- to C-terminus: 5-methyltetrahydropteroyltriglutamate--homocysteine methyltransferase (768 aa).

5-methyltetrahydropteroyltri-L-glutamate is bound by residues 17 to 20 (REWK) and Lys-113. Residues 440 to 442 (IGS) and Glu-493 each bind L-homocysteine. L-methionine is bound by residues 440 to 442 (IGS) and Glu-493. 5-methyltetrahydropteroyltri-L-glutamate is bound at residue Trp-570. Residue Asp-608 participates in L-homocysteine binding. Asp-608 provides a ligand contact to L-methionine. Glu-614 contacts 5-methyltetrahydropteroyltri-L-glutamate. Residues His-650, Cys-652, and Glu-674 each coordinate Zn(2+). The active-site Proton donor is His-703. Cys-735 lines the Zn(2+) pocket.

Belongs to the vitamin-B12 independent methionine synthase family. The cofactor is Zn(2+).

It carries out the reaction 5-methyltetrahydropteroyltri-L-glutamate + L-homocysteine = tetrahydropteroyltri-L-glutamate + L-methionine. It functions in the pathway amino-acid biosynthesis; L-methionine biosynthesis via de novo pathway; L-methionine from L-homocysteine (MetE route): step 1/1. In terms of biological role, catalyzes the transfer of a methyl group from 5-methyltetrahydrofolate to homocysteine resulting in methionine formation. In Lactiplantibacillus plantarum (strain ATCC BAA-793 / NCIMB 8826 / WCFS1) (Lactobacillus plantarum), this protein is 5-methyltetrahydropteroyltriglutamate--homocysteine methyltransferase.